The following is a 573-amino-acid chain: E3 ubiquitin-protein ligase TRIM23 (573 aa).

The RING-type; degenerate zinc-finger motif lies at 31-76; sequence CGVCEDVFSLQGDKVPRLLLCGHTVCHDCLTRLPLHGRAIRCPFDR. Residues 122–168 form a B box-type; degenerate zinc finger; that stretch reads ESIIRCDEDEAHVASVYCTVCATHLCSECSQVTHSTKTLAKHRRVPL. Residues 351 to 378 are a coiled coil; it reads RVVLAKQEITRLLETLQKQQQQFTEVAD. The ARF-like stretch occupies residues 390–573; the sequence is FTKDNRVYHG…LVAAGVLDVA (184 aa). Residues 411–418, 454–458, and 513–516 contribute to the GTP site; these read LDGAGKTT, VGGKH, and KQDV.

In the C-terminal section; belongs to the small GTPase superfamily. Arf family. In terms of assembly, homodimer. Interacts with PSCD1. Interacts with UBE2D2. Interacts with TBK1 (via N-terminal kinase domain) and p62/SQSTM1.

It is found in the cytoplasm. The protein localises to the endomembrane system. Its subcellular location is the golgi apparatus membrane. It localises to the lysosome membrane. The enzyme catalyses S-ubiquitinyl-[E2 ubiquitin-conjugating enzyme]-L-cysteine + [acceptor protein]-L-lysine = [E2 ubiquitin-conjugating enzyme]-L-cysteine + N(6)-ubiquitinyl-[acceptor protein]-L-lysine.. The protein operates within protein modification; protein ubiquitination. Functionally, acts as an E3 ubiquitin-protein ligase. Plays an essential role in autophagy activation during viral infection. Mechanistically, activates TANK-binding kinase 1/TBK1 by facilitating its dimerization and ability to phosphorylate the selective autophagy receptor SQSTM1. In order to achieve this function, TRIM23 mediates 'Lys-27'-linked auto-ubiquitination of its ADP-ribosylation factor (ARF) domain to induce its GTPase activity and its recruitment to autophagosomes. The polypeptide is E3 ubiquitin-protein ligase TRIM23 (Trim23) (Rattus norvegicus (Rat)).